Here is a 456-residue protein sequence, read N- to C-terminus: Bifunctional protein GlmU (456 aa).

Residues 1 to 228 are pyrophosphorylase; that stretch reads MPQNTLNTVI…SHLAAGVNNK (228 aa). UDP-N-acetyl-alpha-D-glucosamine contacts are provided by residues 11–14, lysine 25, glutamine 75, 80–81, 102–104, glycine 138, glutamate 153, asparagine 168, and asparagine 226; these read LAAG, GT, and YGD. Position 104 (aspartate 104) interacts with Mg(2+). Asparagine 226 provides a ligand contact to Mg(2+). The segment at 229-249 is linker; it reads RQLAELERIFQTEQAQELLKA. Residues 250–456 are N-acetyltransferase; that stretch reads GVTLRDPARF…GWMRPEKDKQ (207 aa). Arginine 332 and lysine 350 together coordinate UDP-N-acetyl-alpha-D-glucosamine. Catalysis depends on histidine 362, which acts as the Proton acceptor. Residues tyrosine 365 and asparagine 376 each coordinate UDP-N-acetyl-alpha-D-glucosamine. Acetyl-CoA is bound by residues alanine 379, 385–386, serine 404, alanine 422, and arginine 439; that span reads NY.

It in the N-terminal section; belongs to the N-acetylglucosamine-1-phosphate uridyltransferase family. The protein in the C-terminal section; belongs to the transferase hexapeptide repeat family. Homotrimer. It depends on Mg(2+) as a cofactor.

Its subcellular location is the cytoplasm. It carries out the reaction alpha-D-glucosamine 1-phosphate + acetyl-CoA = N-acetyl-alpha-D-glucosamine 1-phosphate + CoA + H(+). It catalyses the reaction N-acetyl-alpha-D-glucosamine 1-phosphate + UTP + H(+) = UDP-N-acetyl-alpha-D-glucosamine + diphosphate. It functions in the pathway nucleotide-sugar biosynthesis; UDP-N-acetyl-alpha-D-glucosamine biosynthesis; N-acetyl-alpha-D-glucosamine 1-phosphate from alpha-D-glucosamine 6-phosphate (route II): step 2/2. Its pathway is nucleotide-sugar biosynthesis; UDP-N-acetyl-alpha-D-glucosamine biosynthesis; UDP-N-acetyl-alpha-D-glucosamine from N-acetyl-alpha-D-glucosamine 1-phosphate: step 1/1. It participates in bacterial outer membrane biogenesis; LPS lipid A biosynthesis. Its function is as follows. Catalyzes the last two sequential reactions in the de novo biosynthetic pathway for UDP-N-acetylglucosamine (UDP-GlcNAc). The C-terminal domain catalyzes the transfer of acetyl group from acetyl coenzyme A to glucosamine-1-phosphate (GlcN-1-P) to produce N-acetylglucosamine-1-phosphate (GlcNAc-1-P), which is converted into UDP-GlcNAc by the transfer of uridine 5-monophosphate (from uridine 5-triphosphate), a reaction catalyzed by the N-terminal domain. This chain is Bifunctional protein GlmU, found in Neisseria gonorrhoeae (strain ATCC 700825 / FA 1090).